Here is a 443-residue protein sequence, read N- to C-terminus: Thymidine phosphorylase (443 aa).

This sequence belongs to the thymidine/pyrimidine-nucleoside phosphorylase family. As to quaternary structure, homodimer.

It catalyses the reaction thymidine + phosphate = 2-deoxy-alpha-D-ribose 1-phosphate + thymine. Its pathway is pyrimidine metabolism; dTMP biosynthesis via salvage pathway; dTMP from thymine: step 1/2. In terms of biological role, the enzymes which catalyze the reversible phosphorolysis of pyrimidine nucleosides are involved in the degradation of these compounds and in their utilization as carbon and energy sources, or in the rescue of pyrimidine bases for nucleotide synthesis. This Aeromonas hydrophila subsp. hydrophila (strain ATCC 7966 / DSM 30187 / BCRC 13018 / CCUG 14551 / JCM 1027 / KCTC 2358 / NCIMB 9240 / NCTC 8049) protein is Thymidine phosphorylase.